We begin with the raw amino-acid sequence, 131 residues long: Small ribosomal subunit protein uS11 (131 aa).

This sequence belongs to the universal ribosomal protein uS11 family. In terms of assembly, part of the 30S ribosomal subunit.

In terms of biological role, located on the platform of the 30S subunit. This chain is Small ribosomal subunit protein uS11, found in Haloquadratum walsbyi (strain DSM 16790 / HBSQ001).